Here is a 49-residue protein sequence, read N- to C-terminus: Large ribosomal subunit protein bL33A (49 aa).

This sequence belongs to the bacterial ribosomal protein bL33 family.

The protein is Large ribosomal subunit protein bL33A of Bacillus pumilus (strain SAFR-032).